The primary structure comprises 292 residues: Homoserine kinase (292 aa).

84-94 (PLARGMGSSSA) contacts ATP.

This sequence belongs to the GHMP kinase family. Homoserine kinase subfamily.

It is found in the cytoplasm. It catalyses the reaction L-homoserine + ATP = O-phospho-L-homoserine + ADP + H(+). Its pathway is amino-acid biosynthesis; L-threonine biosynthesis; L-threonine from L-aspartate: step 4/5. Its function is as follows. Catalyzes the ATP-dependent phosphorylation of L-homoserine to L-homoserine phosphate. This is Homoserine kinase from Thermus thermophilus (strain ATCC 27634 / DSM 579 / HB8).